The sequence spans 274 residues: Rhamnulose-1-phosphate aldolase (274 aa).

Residue E117 is part of the active site. 3 residues coordinate Zn(2+): H141, H143, and H212.

This sequence belongs to the aldolase class II family. RhaD subfamily. In terms of assembly, homotetramer. The cofactor is Zn(2+).

It localises to the cytoplasm. The enzyme catalyses L-rhamnulose 1-phosphate = (S)-lactaldehyde + dihydroxyacetone phosphate. It participates in carbohydrate degradation; L-rhamnose degradation; glycerone phosphate from L-rhamnose: step 3/3. In terms of biological role, catalyzes the reversible cleavage of L-rhamnulose-1-phosphate to dihydroxyacetone phosphate (DHAP) and L-lactaldehyde. In Pectobacterium atrosepticum (strain SCRI 1043 / ATCC BAA-672) (Erwinia carotovora subsp. atroseptica), this protein is Rhamnulose-1-phosphate aldolase.